A 155-amino-acid polypeptide reads, in one-letter code: Interleukin-2 (155 aa).

An N-terminal signal peptide occupies residues 1–20; the sequence is MYKIQLLSCIALTLALVANG. The O-linked (GalNAc...) threonine glycan is linked to threonine 23. Cysteine 79 and cysteine 127 are disulfide-bonded.

It belongs to the IL-2 family.

Its subcellular location is the secreted. Cytokine produced by activated CD4-positive helper T-cells and to a lesser extend activated CD8-positive T-cells and natural killer (NK) cells that plays pivotal roles in the immune response and tolerance. Binds to a receptor complex composed of either the high-affinity trimeric IL-2R (IL2RA/CD25, IL2RB/CD122 and IL2RG/CD132) or the low-affinity dimeric IL-2R (IL2RB and IL2RG). Interaction with the receptor leads to oligomerization and conformation changes in the IL-2R subunits resulting in downstream signaling starting with phosphorylation of JAK1 and JAK3. In turn, JAK1 and JAK3 phosphorylate the receptor to form a docking site leading to the phosphorylation of several substrates including STAT5. This process leads to activation of several pathways including STAT, phosphoinositide-3-kinase/PI3K and mitogen-activated protein kinase/MAPK pathways. Functions as a T-cell growth factor and can increase NK-cell cytolytic activity as well. Promotes strong proliferation of activated B-cells and subsequently immunoglobulin production. Plays a pivotal role in regulating the adaptive immune system by controlling the survival and proliferation of regulatory T-cells, which are required for the maintenance of immune tolerance. Moreover, participates in the differentiation and homeostasis of effector T-cell subsets, including Th1, Th2, Th17 as well as memory CD8-positive T-cells. The protein is Interleukin-2 (IL2) of Bubalus bubalis (Domestic water buffalo).